We begin with the raw amino-acid sequence, 293 residues long: L-ornithine N(alpha)-acyltransferase (293 aa).

It belongs to the acetyltransferase family. OlsB subfamily.

It carries out the reaction a (3R)-hydroxyacyl-[ACP] + L-ornithine = a lyso-ornithine lipid + holo-[ACP] + H(+). It participates in lipid metabolism. Functionally, catalyzes the first step in the biosynthesis of ornithine lipids, which are phosphorus-free membrane lipids. Catalyzes the 3-hydroxyacyl-acyl carrier protein-dependent acylation of ornithine to form lyso-ornithine lipid (LOL). The polypeptide is L-ornithine N(alpha)-acyltransferase (Agrobacterium fabrum (strain C58 / ATCC 33970) (Agrobacterium tumefaciens (strain C58))).